We begin with the raw amino-acid sequence, 347 residues long: Methylthioribose-1-phosphate isomerase (347 aa).

Substrate contacts are provided by residues 47-49, arginine 90, and glutamine 199; that span reads RGA. The active-site Proton donor is the aspartate 240. 250 to 251 is a binding site for substrate; that stretch reads NK.

This sequence belongs to the eIF-2B alpha/beta/delta subunits family. MtnA subfamily.

The enzyme catalyses 5-(methylsulfanyl)-alpha-D-ribose 1-phosphate = 5-(methylsulfanyl)-D-ribulose 1-phosphate. It functions in the pathway amino-acid biosynthesis; L-methionine biosynthesis via salvage pathway; L-methionine from S-methyl-5-thio-alpha-D-ribose 1-phosphate: step 1/6. Functionally, catalyzes the interconversion of methylthioribose-1-phosphate (MTR-1-P) into methylthioribulose-1-phosphate (MTRu-1-P). This chain is Methylthioribose-1-phosphate isomerase, found in Natranaerobius thermophilus (strain ATCC BAA-1301 / DSM 18059 / JW/NM-WN-LF).